Here is a 505-residue protein sequence, read N- to C-terminus: Lysine--tRNA ligase (505 aa).

The Mg(2+) site is built by Glu415 and Glu422.

It belongs to the class-II aminoacyl-tRNA synthetase family. In terms of assembly, homodimer. Mg(2+) serves as cofactor.

The protein resides in the cytoplasm. It catalyses the reaction tRNA(Lys) + L-lysine + ATP = L-lysyl-tRNA(Lys) + AMP + diphosphate. The chain is Lysine--tRNA ligase from Edwardsiella ictaluri (strain 93-146).